A 275-amino-acid polypeptide reads, in one-letter code: NAD kinase (275 aa).

Aspartate 68 acts as the Proton acceptor in catalysis. NAD(+) contacts are provided by residues 68-69 (DG), arginine 73, 136-137 (NE), lysine 147, arginine 164, aspartate 166, 177-182 (TAYAMS), alanine 201, and glutamine 236.

The protein belongs to the NAD kinase family. A divalent metal cation is required as a cofactor.

It is found in the cytoplasm. It carries out the reaction NAD(+) + ATP = ADP + NADP(+) + H(+). Involved in the regulation of the intracellular balance of NAD and NADP, and is a key enzyme in the biosynthesis of NADP. Catalyzes specifically the phosphorylation on 2'-hydroxyl of the adenosine moiety of NAD to yield NADP. In Methanosarcina acetivorans (strain ATCC 35395 / DSM 2834 / JCM 12185 / C2A), this protein is NAD kinase.